Reading from the N-terminus, the 1846-residue chain is Brefeldin A-inhibited guanine nucleotide-exchange protein 1 (1846 aa).

The interval 2–224 (YEGKKTKNMF…QEAKQMERER (223 aa)) is DCB; DCB:DCB domain and DCB:HUS domain interaction. Ser52 carries the post-translational modification Phosphoserine. Disordered regions lie at residues 217–248 (AKQM…HLRY), 264–302 (DLDP…DQAT), and 347–410 (VSAS…SPGA). Residues 267-277 (PQTHDVDKSLQ) show a composition bias toward basic and acidic residues. Residues Ser286, Ser289, Ser290, Ser394, and Ser407 each carry the phosphoserine modification. The span at 391–406 (SVSSNDTQESGNSSGP) shows a compositional bias: polar residues. An HUS; DCB:HUS domain interaction region spans residues 554-574 (ADAQSVVDIYVNYDCDLNAAN). Residues 631-684 (PNSQTTLGQEKPSEQEISEIKHPETINRYGSLNSLESTSSSGIGSYSTQMSGTD) are disordered. The segment covering 641-655 (KPSEQEISEIKHPET) has biased composition (basic and acidic residues). Low complexity predominate over residues 661 to 681 (SLNSLESTSSSGIGSYSTQMS). Positions 688-877 (QFEVLKQQKE…SAIYNEIAGK (190 aa)) constitute an SEC7 domain. Residues 708–712 (KKPKR) carry the Nuclear localization signal (NLS) motif. 3 positions are modified to phosphoserine: Ser1076, Ser1563, and Ser1566. Positions 1571-1600 (DSAQPRSSDNRQQAPLVSVSPASEEVSKGR) are disordered. A compositionally biased stretch (polar residues) spans 1574–1585 (QPRSSDNRQQAP).

Homodimer. Interacts with ARFGEF2/BIG2; both proteins are probably part of the same or very similar macromolecular complexes. Interacts with FKBP2. Interacts with MYO9B. Interacts with PRKAR1A and PRKAR2A. Interacts with PPP1CC. Interacts with NCL, FBL, NUP62 and U3 small nucleolar RNA. Interacts with DPY30. Interacts with PDE3A. Interacts with KANK1. Interacts with TBC1D22A and TBC1D22B. Post-translationally, phosphorylated. In vitro phosphorylated by PKA reducing its GEF activity and dephosphorylated by phosphatase PP1.

The protein localises to the cytoplasm. Its subcellular location is the perinuclear region. It is found in the golgi apparatus. It localises to the trans-Golgi network. The protein resides in the nucleus. The protein localises to the nucleolus. Its subcellular location is the nucleus matrix. It is found in the membrane. Inhibited by brefeldin A. In terms of biological role, promotes guanine-nucleotide exchange on ARF1 and ARF3. Promotes the activation of ARF1/ARF3 through replacement of GDP with GTP. Involved in vesicular trafficking. Required for the maintenance of Golgi structure; the function may be independent of its GEF activity. Required for the maturation of integrin beta-1 in the Golgi. Involved in the establishment and persistence of cell polarity during directed cell movement in wound healing. Proposed to act as A kinase-anchoring protein (AKAP) and may mediate crosstalk between Arf and PKA pathways. Inhibits GAP activity of MYO9B probably through competitive RhoA binding. The function in the nucleus remains to be determined. This is Brefeldin A-inhibited guanine nucleotide-exchange protein 1 (Arfgef1) from Rattus norvegicus (Rat).